We begin with the raw amino-acid sequence, 455 residues long: Pup--protein ligase (455 aa).

Glu10 provides a ligand contact to Mg(2+). Arg55 contacts ATP. Tyr57 provides a ligand contact to Mg(2+). Asp59 functions as the Proton acceptor in the catalytic mechanism. Glu65 lines the Mg(2+) pocket. The ATP site is built by Thr68 and Trp422.

The protein belongs to the Pup ligase/Pup deamidase family. Pup-conjugating enzyme subfamily.

It catalyses the reaction ATP + [prokaryotic ubiquitin-like protein]-L-glutamate + [protein]-L-lysine = ADP + phosphate + N(6)-([prokaryotic ubiquitin-like protein]-gamma-L-glutamyl)-[protein]-L-lysine.. The protein operates within protein degradation; proteasomal Pup-dependent pathway. It functions in the pathway protein modification; protein pupylation. Functionally, catalyzes the covalent attachment of the prokaryotic ubiquitin-like protein modifier Pup to the proteasomal substrate proteins, thereby targeting them for proteasomal degradation. This tagging system is termed pupylation. The ligation reaction involves the side-chain carboxylate of the C-terminal glutamate of Pup and the side-chain amino group of a substrate lysine. This chain is Pup--protein ligase, found in Sanguibacter keddieii (strain ATCC 51767 / DSM 10542 / NCFB 3025 / ST-74).